Here is a 240-residue protein sequence, read N- to C-terminus: MTLATPAHKRILLKLSGEALMGDDAFGINRATIVRMVEEIAEVTRLGVQVAVVIGGGNIFRGVAGGSVGMDRATADYMGMLATVMNALALADAMDKQGLTARVMSAIGIEQVVEPYVRPKALQYLEEGKVVVFAAGTGNPFFTTDTAAALRGAEIGAEVVLKATKVDGVYTADPMKDPSATRYAKLTFDEAMSRNLGILDATAFALCRDQKLPIRVFSIVKHGALKRVVMGEDEGTLVYA.

14-17 (KLSG) lines the ATP pocket. Residue G56 coordinates UMP. G57 and R61 together coordinate ATP. Residues D76 and 137-144 (TGNPFFTT) contribute to the UMP site. Residues T164, Y170, and D173 each contribute to the ATP site.

This sequence belongs to the UMP kinase family. In terms of assembly, homohexamer.

It localises to the cytoplasm. It carries out the reaction UMP + ATP = UDP + ADP. It functions in the pathway pyrimidine metabolism; CTP biosynthesis via de novo pathway; UDP from UMP (UMPK route): step 1/1. Inhibited by UTP. Catalyzes the reversible phosphorylation of UMP to UDP. This chain is Uridylate kinase, found in Acidovorax sp. (strain JS42).